Consider the following 800-residue polypeptide: Mitochondrial intermediate peptidase (800 aa).

The N-terminal 23 residues, 1-23 (MAGHMLMPLRRRPWTCRACLQRL), are a transit peptide targeting the mitochondrion. Residues 27–41 (RRSLETAASPSSQSD) are compositionally biased toward polar residues. A disordered region spans residues 27-59 (RRSLETAASPSSQSDVYDYAPTNHSTQKKSNDE). His563 serves as a coordination point for Zn(2+). Glu564 is an active-site residue. Residues His567 and His570 each contribute to the Zn(2+) site.

This sequence belongs to the peptidase M3 family. It depends on Zn(2+) as a cofactor.

It localises to the mitochondrion matrix. The catalysed reaction is Release of an N-terminal octapeptide as second stage of processing of some proteins imported into the mitochondrion.. Functionally, cleaves proteins, imported into the mitochondrion, to their mature size. While most mitochondrial precursor proteins are processed to the mature form in one step by mitochondrial processing peptidase (MPP), the sequential cleavage by MIP of an octapeptide after initial processing by MPP is a required step for a subgroup of nuclear-encoded precursor proteins destined for the matrix or the inner membrane. The protein is Mitochondrial intermediate peptidase (oct1) of Aspergillus oryzae (strain ATCC 42149 / RIB 40) (Yellow koji mold).